A 147-amino-acid chain; its full sequence is Large ribosomal subunit protein uL13 (147 aa).

It belongs to the universal ribosomal protein uL13 family. Part of the 50S ribosomal subunit.

Its function is as follows. This protein is one of the early assembly proteins of the 50S ribosomal subunit, although it is not seen to bind rRNA by itself. It is important during the early stages of 50S assembly. The polypeptide is Large ribosomal subunit protein uL13 (Streptomyces griseus subsp. griseus (strain JCM 4626 / CBS 651.72 / NBRC 13350 / KCC S-0626 / ISP 5235)).